Here is a 470-residue protein sequence, read N- to C-terminus: Dendritic cell-specific transmembrane protein (470 aa).

At 1 to 34 (MGIWTSGTDIFLSLWEIYVSPRSPGWMDFIQHLG) the chain is on the cytoplasmic side. A helical transmembrane segment spans residues 35–55 (VCCLVALISVGLLSVAACWFL). The Extracellular segment spans residues 56 to 57 (PS). Residues 58-78 (IIAAAASWIITCVLLCCSKHA) form a helical membrane-spanning segment. Residues 79–97 (RCFILLVFLSCGLREGRNA) are Cytoplasmic-facing. The helical transmembrane segment at 98 to 118 (LIAAGTGIVILGHVENIFHNF) threads the bilayer. Residues 119 to 209 (KGLLDGMTCN…MATTTEVLSS (91 aa)) lie on the Extracellular side of the membrane. A helical membrane pass occupies residues 210-230 (LGQKLLAFAGLSLVLLGTGLF). Residues 231–292 (MKRFLGPCGW…FWPTPKERKN (62 aa)) are Cytoplasmic-facing. Residues 293-313 (LGLFFLPILIHLCIWVLFAAV) form a helical membrane-spanning segment. Residues 314–376 (DYLLYRLIFS…PKPKFLLSET (63 aa)) lie on the Extracellular side of the membrane. Residues 377–397 (WVPLSVILLILVMLGLLSSIL) form a helical membrane-spanning segment. Topologically, residues 398–470 (MQLKILVSAS…QMDMASADKS (73 aa)) are cytoplasmic.

In terms of assembly, monomer. Homodimer. Isoform 1 interacts (via the C-terminus cytoplasmic tail) with OS9 isoform 1 (via the C-terminus tail); the interaction induces DCSTAMP redistribution to the endoplasmic reticulum-Golgi intermediate compartment. Isoform 1 interacts (via the C-terminus cytoplasmic tail) with OS9 isoform 2 (via the C-terminus tail). Interacts with CREB3. Glycosylated. In terms of tissue distribution, preferentially expressed by dendritic cells (DCs). Detected in both immature and mature DCs. Highly expressed in lymph nodes, lung, kidney and liver. Expressed at lower levels in pancreas, bone marrow, spleen, leukocytes, in freshly isolated peripheral blood mononuclear cells (PBMC) and B-cells. Not expressed in freshly isolated monocytes.

It localises to the cell membrane. The protein resides in the endoplasmic reticulum membrane. The protein localises to the endoplasmic reticulum-Golgi intermediate compartment membrane. It is found in the endosome. Its function is as follows. Probable cell surface receptor that plays several roles in cellular fusion, cell differentiation, bone and immune homeostasis. Plays a role in TNFSF11-mediated osteoclastogenesis. Cooperates with OCSTAMP in modulating cell-cell fusion in both osteoclasts and foreign body giant cells (FBGCs). Participates in osteoclast bone resorption. Involved in inducing the expression of tartrate-resistant acid phosphatase in osteoclast precursors. Plays a role in haematopoietic stem cell differentiation of bone marrow cells toward the myeloid lineage. Inhibits the development of neutrophilic granulocytes. Plays also a role in the regulation of dendritic cell (DC) antigen presentation activity by controlling phagocytic activity. Involved in the maintenance of immune self-tolerance and avoidance of autoimmune reactions. The sequence is that of Dendritic cell-specific transmembrane protein (DCSTAMP) from Homo sapiens (Human).